A 295-amino-acid polypeptide reads, in one-letter code: Excinuclease cho (295 aa).

The GIY-YIG domain maps to 33-108 (TRPGVYLFHG…IKEQQPLFNK (76 aa)).

Its function is as follows. Incises the DNA at the 3' side of a lesion during nucleotide excision repair. Incises the DNA farther away from the lesion than UvrC. Not able to incise the 5' site of a lesion. When a lesion remains because UvrC is not able to induce the 3' incision, Cho incises the DNA. Then UvrC makes the 5' incision. The combined action of Cho and UvrC broadens the substrate range of nucleotide excision repair. The protein is Excinuclease cho (cho) of Escherichia coli O6:H1 (strain CFT073 / ATCC 700928 / UPEC).